We begin with the raw amino-acid sequence, 267 residues long: 4-hydroxy-tetrahydrodipicolinate reductase (267 aa).

8-13 (GANGRM) serves as a coordination point for NAD(+). Residue Arg35 participates in NADP(+) binding. Residues 98–100 (GTT) and 122–125 (AANY) each bind NAD(+). The active-site Proton donor/acceptor is the His155. His156 provides a ligand contact to (S)-2,3,4,5-tetrahydrodipicolinate. The active-site Proton donor is Lys159. 165–166 (GT) is a binding site for (S)-2,3,4,5-tetrahydrodipicolinate.

It belongs to the DapB family.

Its subcellular location is the cytoplasm. It catalyses the reaction (S)-2,3,4,5-tetrahydrodipicolinate + NAD(+) + H2O = (2S,4S)-4-hydroxy-2,3,4,5-tetrahydrodipicolinate + NADH + H(+). The enzyme catalyses (S)-2,3,4,5-tetrahydrodipicolinate + NADP(+) + H2O = (2S,4S)-4-hydroxy-2,3,4,5-tetrahydrodipicolinate + NADPH + H(+). The protein operates within amino-acid biosynthesis; L-lysine biosynthesis via DAP pathway; (S)-tetrahydrodipicolinate from L-aspartate: step 4/4. Catalyzes the conversion of 4-hydroxy-tetrahydrodipicolinate (HTPA) to tetrahydrodipicolinate. The polypeptide is 4-hydroxy-tetrahydrodipicolinate reductase (Pseudoalteromonas atlantica (strain T6c / ATCC BAA-1087)).